Here is a 101-residue protein sequence, read N- to C-terminus: Chaperone modulatory protein CbpM (101 aa).

Belongs to the CbpM family.

In terms of biological role, interacts with CbpA and inhibits both the DnaJ-like co-chaperone activity and the DNA binding activity of CbpA. Together with CbpA, modulates the activity of the DnaK chaperone system. Does not inhibit the co-chaperone activity of DnaJ. The chain is Chaperone modulatory protein CbpM from Pseudomonas putida (strain ATCC 700007 / DSM 6899 / JCM 31910 / BCRC 17059 / LMG 24140 / F1).